The sequence spans 284 residues: MTELIDGKALAQKMQQELAAKVNNLKQKKGIVPGLAVILVGDDPASQVYVRNKERAALTVGFKSETVRLSEFICQEELIAVIERYNADNTIHGILVQLPLPNHINDKKIILAIDPKKDVDGFHPMNTGHLWSGRPLMVPCTPSGIMELLREYNVNLEGKHAVIIGRSNIVGKPMAQLLLDKNATVTLTHSRTRQLEEVCRCADVLIVAIGQGHFITKQYIKEGAIVIDVGMNRDDNGKLIGDVAFDEVAEVAAKITPVPGGVGPMTIAMLLEQTYQSALRSTHK.

NADP(+)-binding positions include 165–167 and Ser190; that span reads GRS.

Belongs to the tetrahydrofolate dehydrogenase/cyclohydrolase family. In terms of assembly, homodimer.

The enzyme catalyses (6R)-5,10-methylene-5,6,7,8-tetrahydrofolate + NADP(+) = (6R)-5,10-methenyltetrahydrofolate + NADPH. The catalysed reaction is (6R)-5,10-methenyltetrahydrofolate + H2O = (6R)-10-formyltetrahydrofolate + H(+). It functions in the pathway one-carbon metabolism; tetrahydrofolate interconversion. Its function is as follows. Catalyzes the oxidation of 5,10-methylenetetrahydrofolate to 5,10-methenyltetrahydrofolate and then the hydrolysis of 5,10-methenyltetrahydrofolate to 10-formyltetrahydrofolate. The chain is Bifunctional protein FolD from Streptococcus pyogenes serotype M2 (strain MGAS10270).